Here is a 565-residue protein sequence, read N- to C-terminus: MTKKLTPQEKKNRKPAVRACVFCHQKHLQCSNERPCKNCVKRNIAHGCKDIVRKRVKYLTGEGVSGTVSSKQSTPRKKLKTSPLSTSMSPTDSMKSDLATPVESSNHFPASISSSVDVMTATQPSAMNTPSDAQPINDILEVPPLFDNSHMINSDVPGTNITLTTQNLITPDPLSFHTNTVSNTTTDVLNKLLNDNYETESLLSVNNNGDHLLEMAHTSSGHLSNGQQFQSNYLNEEYMMLGDIILQSKQVSPSPSNTSTSENNTNTLSPSSFGYMSNINFEDFNQPKKKVVQKLKDSRPFISLGFTEELAPHDSSNNADYYGHRMTNDIVGKTDEGPGNPIINYNTKFTTDYVPPSITNNLYKTASDLYSKELKNFYYPLSYHALTKLLKVIFGGNNLSPEEKQEKRSKLLIILKLIASYRPTFIAAHRDLIQEDLLMLEMTLQRSLLDYKKLAELNSSPTIMWRRTGEIISITEDMALLLEHSSFDLLKERRFIFELMDDNSIVDYFNLFANIAVGNLKSVIQTAIQMKTKSSNLIKFTCVFTIKRDIFDIPMIVIGQFLPIV.

Positions Cys20–Cys48 form a DNA-binding region, zn(2)-C6 fungal-type. 2 disordered regions span residues Gly63–Asn106 and Gln250–Ser269. Residues Ser82–Ser93 show a composition bias toward polar residues. A compositionally biased stretch (low complexity) spans Ser252–Ser269.

The protein belongs to the ERT1/acuK family.

The protein localises to the nucleus. In terms of biological role, transcription factor which regulates nonfermentable carbon utilization. The sequence is that of Glucose starvation modulator protein 1 (GSM1) from Candida dubliniensis (strain CD36 / ATCC MYA-646 / CBS 7987 / NCPF 3949 / NRRL Y-17841) (Yeast).